Here is a 118-residue protein sequence, read N- to C-terminus: Small ribosomal subunit protein mS37 (118 aa).

The CHCH domain maps to 42–84 (EATCITEMSVMMACWKQNEFRDDACRKEIQGFLDCAARAQEAR). 2 short sequence motifs (cx9C motif) span residues 45–55 (CITEMSVMMAC) and 66–76 (CRKEIQGFLDC). 2 cysteine pairs are disulfide-bonded: Cys-45/Cys-76 and Cys-55/Cys-66.

It belongs to the mitochondrion-specific ribosomal protein mS37 family. Component of the mitochondrial small ribosomal subunit (mt-SSU). Mature mammalian 55S mitochondrial ribosomes consist of a small (28S) and a large (39S) subunit. The 28S small subunit contains a 12S ribosomal RNA (12S mt-rRNA) and 30 different proteins. The 39S large subunit contains a 16S rRNA (16S mt-rRNA), a copy of mitochondrial valine transfer RNA (mt-tRNA(Val)), which plays an integral structural role, and 52 different proteins.

The protein localises to the mitochondrion. The protein resides in the nucleus. The protein is Small ribosomal subunit protein mS37 (CHCHD1) of Homo sapiens (Human).